A 717-amino-acid chain; its full sequence is Copine family protein 5 (717 aa).

The C2 domain occupies 193-318; the sequence is YLGGIIVSAE…KYGPGSDNVY (126 aa). Residues 377–567 enclose the VWFA domain; it reads ELDQRRFDGE…LNKSRIAETA (191 aa).

This sequence belongs to the copine family.

This Caenorhabditis elegans protein is Copine family protein 5 (cpna-5).